A 205-amino-acid polypeptide reads, in one-letter code: Small ribosomal subunit protein uS4c (205 aa).

The interval 22–42 (TSKISKKTNTPGEHGQPQNKL) is disordered. Over residues 28–42 (KTNTPGEHGQPQNKL) the composition is skewed to polar residues. The region spanning 94-157 (MRLDNIVYRL…ASRDLVKKFV (64 aa)) is the S4 RNA-binding domain.

Belongs to the universal ribosomal protein uS4 family. As to quaternary structure, part of the 30S ribosomal subunit. Contacts protein S5. The interaction surface between S4 and S5 is involved in control of translational fidelity.

It is found in the plastid. Its subcellular location is the chloroplast. Functionally, one of the primary rRNA binding proteins, it binds directly to 16S rRNA where it nucleates assembly of the body of the 30S subunit. In terms of biological role, with S5 and S12 plays an important role in translational accuracy. The polypeptide is Small ribosomal subunit protein uS4c (rps4) (Tupiella akineta (Green alga)).